The following is a 281-amino-acid chain: 2-dehydro-3-deoxyphosphooctonate aldolase (281 aa).

It belongs to the KdsA family.

It localises to the cytoplasm. It catalyses the reaction D-arabinose 5-phosphate + phosphoenolpyruvate + H2O = 3-deoxy-alpha-D-manno-2-octulosonate-8-phosphate + phosphate. Its pathway is carbohydrate biosynthesis; 3-deoxy-D-manno-octulosonate biosynthesis; 3-deoxy-D-manno-octulosonate from D-ribulose 5-phosphate: step 2/3. The protein operates within bacterial outer membrane biogenesis; lipopolysaccharide biosynthesis. The sequence is that of 2-dehydro-3-deoxyphosphooctonate aldolase from Pseudomonas fluorescens (strain SBW25).